The primary structure comprises 463 residues: Hexose-6-phosphate:phosphate antiporter (463 aa).

Residues 1–24 (MLAFLNQVRKPTLDLPLEVRRKMW) are Cytoplasmic-facing. Residues 25 to 45 (FKPFMQSYLVVFIGYLTMYLI) traverse the membrane as a helical segment. Topologically, residues 46 to 60 (RKNFNIAQNDMISTY) are periplasmic. Residues 61–81 (GLSMTQLGMIGLGFSITYGVG) traverse the membrane as a helical segment. The Cytoplasmic segment spans residues 82 to 96 (KTLVSYYADGKNTKQ). Residues 97-117 (FLPFMLILSAICMLGFSASMG) traverse the membrane as a helical segment. Over 118–120 (SGS) the chain is Periplasmic. The helical transmembrane segment at 121–141 (VSLFLMIAFYALSGFFQSTGG) threads the bilayer. The Cytoplasmic portion of the chain corresponds to 142-159 (SCSYSTITKWTPRRKRGT). A helical membrane pass occupies residues 160-180 (FLGFWNISHNLGGAGAAGVAL). Residues 181–189 (FGANYLFDG) are Periplasmic-facing. A helical membrane pass occupies residues 190-210 (HVIGMFIFPSIIALIVGFIGL). Residues 211–259 (RYGSDSPESYGLGKAEELFGEEISEEDKETESTDMTKWQIFVEYVLKNK) lie on the Cytoplasmic side of the membrane. Residues 260–280 (VIWLLCFANIFLYVVRIGIDQ) form a helical membrane-spanning segment. Over 281–297 (WSTVYAFQELKLSKAVA) the chain is Periplasmic. Residues 298–318 (IQGFTLFEAGALVGTLLWGWL) traverse the membrane as a helical segment. At 319-326 (SDLANGRR) the chain is on the cytoplasmic side. The helical transmembrane segment at 327–347 (GLVACIALALIIATLGVYQHA) threads the bilayer. Residues 348–357 (SNEYIYLASL) lie on the Periplasmic side of the membrane. The helical transmembrane segment at 358–378 (FALGFLVFGPQLLIGVAAVGF) threads the bilayer. The Cytoplasmic portion of the chain corresponds to 379–382 (VPKK). A helical membrane pass occupies residues 383–403 (AIGAADGIKGTFAYLIGDSFA). The Periplasmic segment spans residues 404–425 (KLGLGMIADGTPVFGLTGWAGT). A helical transmembrane segment spans residues 426-446 (FAALDIAAIGCICLMAIVAVM). At 447-463 (EERKIRREKKIQQLTVA) the chain is on the cytoplasmic side.

This sequence belongs to the major facilitator superfamily. Organophosphate:Pi antiporter (OPA) (TC 2.A.1.4) family.

It is found in the cell inner membrane. Mediates the exchange of external hexose 6-phosphate and internal inorganic phosphate. In Escherichia coli O157:H7, this protein is Hexose-6-phosphate:phosphate antiporter (uhpT).